The chain runs to 266 residues: Glucosamine-6-phosphate deaminase (266 aa).

Asp-72 (proton acceptor; for enolization step) is an active-site residue. The active-site For ring-opening step is Asp-141. His-143 functions as the Proton acceptor; for ring-opening step in the catalytic mechanism. Glu-148 functions as the For ring-opening step in the catalytic mechanism.

It belongs to the glucosamine/galactosamine-6-phosphate isomerase family. NagB subfamily. In terms of assembly, homohexamer; trimer of disulfide-linked dimers.

It catalyses the reaction alpha-D-glucosamine 6-phosphate + H2O = beta-D-fructose 6-phosphate + NH4(+). The protein operates within amino-sugar metabolism; N-acetylneuraminate degradation; D-fructose 6-phosphate from N-acetylneuraminate: step 5/5. With respect to regulation, allosterically activated by N-acetylglucosamine 6-phosphate (GlcNAc6P). In terms of biological role, catalyzes the reversible isomerization-deamination of glucosamine 6-phosphate (GlcN6P) to form fructose 6-phosphate (Fru6P) and ammonium ion. The polypeptide is Glucosamine-6-phosphate deaminase (Shigella boydii serotype 18 (strain CDC 3083-94 / BS512)).